We begin with the raw amino-acid sequence, 167 residues long: MGITKEEVNSYYQKAGIVLTDEEVDQIQLMDYGLGKERKVGLQLFVYVNTDRYCSKELVLFPGQTCPEHRHPPVDGQEGKQETFRCRYGKVYLYVEGEKTPLPKVLPPQEDREHYTVWHEIELEPGGQYTIPPNTKHWFQAGEEGAVVTEMSSTSTDKHDIFTDPRI.

Residues histidine 69, histidine 71, glutamate 82, and histidine 137 each coordinate Mn(2+).

Belongs to the D-lyxose ketol-isomerase family. In terms of assembly, homodimer. The cofactor is Mn(2+).

The catalysed reaction is D-lyxose = D-xylulose. In terms of biological role, sugar isomerase that catalyzes the reversible isomerization of D-lyxose to D-xylulose. This chain is Probable D-lyxose ketol-isomerase (ydaE), found in Bacillus subtilis (strain 168).